Here is a 315-residue protein sequence, read N- to C-terminus: Putative glycosyltransferase ORF315 (315 aa).

It belongs to the glycosyltransferase group 1 family. Glycosyltransferase 4 subfamily.

This Acidianus convivator (ABV) protein is Putative glycosyltransferase ORF315.